Reading from the N-terminus, the 426-residue chain is Serine--tRNA ligase (426 aa).

Thr233–Glu235 lines the L-serine pocket. ATP is bound at residue Arg264 to Glu266. Glu287 is an L-serine binding site. An ATP-binding site is contributed by Glu351–Ser354. An L-serine-binding site is contributed by Ser387.

Belongs to the class-II aminoacyl-tRNA synthetase family. Type-1 seryl-tRNA synthetase subfamily. As to quaternary structure, homodimer. The tRNA molecule binds across the dimer.

The protein resides in the cytoplasm. It catalyses the reaction tRNA(Ser) + L-serine + ATP = L-seryl-tRNA(Ser) + AMP + diphosphate + H(+). The enzyme catalyses tRNA(Sec) + L-serine + ATP = L-seryl-tRNA(Sec) + AMP + diphosphate + H(+). The protein operates within aminoacyl-tRNA biosynthesis; selenocysteinyl-tRNA(Sec) biosynthesis; L-seryl-tRNA(Sec) from L-serine and tRNA(Sec): step 1/1. Functionally, catalyzes the attachment of serine to tRNA(Ser). Is also able to aminoacylate tRNA(Sec) with serine, to form the misacylated tRNA L-seryl-tRNA(Sec), which will be further converted into selenocysteinyl-tRNA(Sec). This chain is Serine--tRNA ligase, found in Azotobacter vinelandii (strain DJ / ATCC BAA-1303).